Reading from the N-terminus, the 480-residue chain is MFRSFASPLALVATSAIASNPATTAQHQGSFWIQTFGCQMNKADSERMAGILEAMGYHEAPAELEADLVLYNTCTIRDNAEQKVYSYLGRQARRKRTHPHLKLVVAGCVAQQEGEALLRRIPELDLVMGPQHANRLEALLTQVDNGQQVVATDDNHILEDLTTARRDSTICAWVNVIYGCNERCTYCVVPSVRGKEQSRSPEAIRLEIEGLAARGFREITLLGQNIDAYGRDLPGITPEGRRQNTLTDLLHHIHDVEGIERIRFATSHPRYFTERLIEACFDLPKVCEHFHIPFQSGDNDVLKAMARGYTVERYRRIVNRIRELMPDAAISTDVIVAFPGETDAQFQNTLNLLEEVGFDQVNTAAYSPRPNTPAATWSNQLPEAVKVERLKQLNALVERIALQRNSRYSGKVEQVLAEGINPKKPQQLMGRTRTNRLTFFATEGPQGCRYSPGDLVDIQINSVRAFSLSGTPCEQTRSRH.

One can recognise an MTTase N-terminal domain in the interval 29–145; it reads GSFWIQTFGC…LEALLTQVDN (117 aa). The [4Fe-4S] cluster site is built by Cys-38, Cys-74, Cys-108, Cys-180, Cys-184, and Cys-187. The Radical SAM core domain maps to 166 to 403; it reads RDSTICAWVN…NALVERIALQ (238 aa). Residues 406-474 form the TRAM domain; the sequence is SRYSGKVEQV…AFSLSGTPCE (69 aa).

Belongs to the methylthiotransferase family. MiaB subfamily. In terms of assembly, monomer. Requires [4Fe-4S] cluster as cofactor.

It is found in the cytoplasm. It carries out the reaction N(6)-dimethylallyladenosine(37) in tRNA + (sulfur carrier)-SH + AH2 + 2 S-adenosyl-L-methionine = 2-methylsulfanyl-N(6)-dimethylallyladenosine(37) in tRNA + (sulfur carrier)-H + 5'-deoxyadenosine + L-methionine + A + S-adenosyl-L-homocysteine + 2 H(+). Its function is as follows. Catalyzes the methylthiolation of N6-(dimethylallyl)adenosine (i(6)A), leading to the formation of 2-methylthio-N6-(dimethylallyl)adenosine (ms(2)i(6)A) at position 37 in tRNAs that read codons beginning with uridine. This Prochlorococcus marinus (strain MIT 9313) protein is tRNA-2-methylthio-N(6)-dimethylallyladenosine synthase.